Here is a 132-residue protein sequence, read N- to C-terminus: Interleukin-13 (132 aa).

A signal peptide spans 1 to 18 (MALLLTTVIALTCLGGFA). N-linked (GlcNAc...) asparagine glycosylation is found at Asn-38, Asn-49, Asn-57, and Asn-72. Cystine bridges form between Cys-48-Cys-76 and Cys-64-Cys-90.

The protein belongs to the IL-4/IL-13 family. As to quaternary structure, interacts with IL13RA2.

The protein resides in the secreted. Its function is as follows. Cytokine that plays important roles in allergic inflammation and immune response to parasite infection. Synergizes with IL2 in regulating interferon-gamma synthesis. Stimulates B-cell proliferation, and activation of eosinophils, basophils, and mast cells. Plays an important role in controlling IL33 activity by modulating the production of transmembrane and soluble forms of interleukin-1 receptor-like 1/IL1RL1. Displays the capacity to antagonize Th1-driven proinflammatory immune response and downregulates synthesis of many proinflammatory cytokines including IL1, IL6, IL10, IL12 and TNF-alpha through a mechanism that partially involves suppression of NF-kappa-B. Also functions on nonhematopoietic cells, including endothelial cells where it induces vascular cell adhesion protein 1/VCAM1, which is important in the recruitment of eosinophils. Exerts its biological effects through its receptors which comprises the IL4R chain and the IL13RA1 chain, to activate JAK1 and TYK2, leading to the activation of STAT6. Aside from IL13RA1, another receptor IL13RA2 acts as a high affinity decoy for IL13 and mediates internalization and depletion of extracellular IL13. This chain is Interleukin-13 (IL13), found in Macaca mulatta (Rhesus macaque).